The chain runs to 98 residues: Citrate lyase acyl carrier protein (98 aa).

S14 is subject to O-(phosphoribosyl dephospho-coenzyme A)serine.

Belongs to the CitD family. In terms of assembly, oligomer with a subunit composition of (alpha,beta,gamma)6.

The protein localises to the cytoplasm. In terms of biological role, covalent carrier of the coenzyme of citrate lyase. This Shigella flexneri protein is Citrate lyase acyl carrier protein.